The chain runs to 1389 residues: DNA-directed RNA polymerase subunit beta'' (1389 aa).

Positions 220, 290, 297, and 300 each coordinate Zn(2+).

Belongs to the RNA polymerase beta' chain family. RpoC2 subfamily. As to quaternary structure, in plastids the minimal PEP RNA polymerase catalytic core is composed of four subunits: alpha, beta, beta', and beta''. When a (nuclear-encoded) sigma factor is associated with the core the holoenzyme is formed, which can initiate transcription. Zn(2+) is required as a cofactor.

The protein resides in the plastid. The protein localises to the chloroplast. It carries out the reaction RNA(n) + a ribonucleoside 5'-triphosphate = RNA(n+1) + diphosphate. In terms of biological role, DNA-dependent RNA polymerase catalyzes the transcription of DNA into RNA using the four ribonucleoside triphosphates as substrates. The polypeptide is DNA-directed RNA polymerase subunit beta'' (Chloranthus spicatus (Chulantree)).